The following is a 146-amino-acid chain: P antigen family member 1 (146 aa).

The disordered stretch occupies residues 16–146 (YVESSEESSD…PEEDEGQSQP (131 aa)). Residues 19-32 (SSEESSDEQPDEVE) are compositionally biased toward acidic residues. Ser-63 bears the Phosphoserine mark. Residues 79–92 (PDTKRVCLRNEEQM) are compositionally biased toward basic and acidic residues. A Phosphoserine modification is found at Ser-105. The segment covering 107 to 120 (EQVHPKTGCERGDG) has biased composition (basic and acidic residues). A Phosphoserine modification is found at Ser-144.

This sequence belongs to the GAGE family. Isolated from prostate cancer cell lines; expression associated with progression to androgen insensitive phenotype. Expressed in normal testis and at lower level in normal placenta.

The protein is P antigen family member 1 (PAGE1) of Homo sapiens (Human).